A 97-amino-acid polypeptide reads, in one-letter code: Co-chaperonin GroES (97 aa).

Belongs to the GroES chaperonin family. Heptamer of 7 subunits arranged in a ring. Interacts with the chaperonin GroEL.

The protein resides in the cytoplasm. In terms of biological role, together with the chaperonin GroEL, plays an essential role in assisting protein folding. The GroEL-GroES system forms a nano-cage that allows encapsulation of the non-native substrate proteins and provides a physical environment optimized to promote and accelerate protein folding. GroES binds to the apical surface of the GroEL ring, thereby capping the opening of the GroEL channel. The sequence is that of Co-chaperonin GroES from Burkholderia cepacia (Pseudomonas cepacia).